The chain runs to 369 residues: Deoxyhypusine synthase (369 aa).

S78 carries the phosphoserine modification. Residues 105-109 (SNLIS), 131-133 (TAG), E137, and D238 contribute to the NAD(+) site. 136-137 (EE) lines the spermidine pocket. D243 serves as a coordination point for spermidine. An NAD(+)-binding site is contributed by G283. Residue H288 participates in spermidine binding. 308–309 (TA) serves as a coordination point for NAD(+). Residues 314-316 (GSD) and 323-329 (EAVSWGK) contribute to the spermidine site. K329 acts as the Nucleophile in catalysis. Residue 342 to 343 (DA) participates in NAD(+) binding.

Belongs to the deoxyhypusine synthase family. As to quaternary structure, homotetramer formed by a dimer of dimers. Requires NAD(+) as cofactor.

The catalysed reaction is [eIF5A protein]-L-lysine + spermidine = [eIF5A protein]-deoxyhypusine + propane-1,3-diamine. It functions in the pathway protein modification; eIF5A hypusination. Catalyzes the NAD-dependent oxidative cleavage of spermidine and the subsequent transfer of the butylamine moiety of spermidine to the epsilon-amino group of a critical lysine residue of the eIF-5A precursor protein to form the intermediate deoxyhypusine residue. This is the first step of the post-translational modification of that lysine into an unusual amino acid residue named hypusine. Hypusination is unique to mature eIF-5A factor and is essential for its function. This Homo sapiens (Human) protein is Deoxyhypusine synthase (DHPS).